Reading from the N-terminus, the 569-residue chain is 3-(3-hydroxy-phenyl)propionate/3-hydroxycinnamic acid hydroxylase (569 aa).

Residues 8–37 (DVVI…VVDE) and 273–283 (FREGRLMLAGD) each bind FAD.

Belongs to the PheA/TfdB FAD monooxygenase family. The cofactor is FAD.

The catalysed reaction is 3-(3-hydroxyphenyl)propanoate + NADH + O2 + H(+) = 3-(2,3-dihydroxyphenyl)propanoate + NAD(+) + H2O. It catalyses the reaction (2E)-3-(3-hydroxyphenyl)prop-2-enoate + NADH + O2 + H(+) = (2E)-3-(2,3-dihydroxyphenyl)prop-2-enoate + NAD(+) + H2O. It participates in aromatic compound metabolism; 3-phenylpropanoate degradation. Functionally, catalyzes the insertion of one atom of molecular oxygen into position 2 of the phenyl ring of 3-(3-hydroxyphenyl)propionate (3-HPP) and hydroxycinnamic acid (3HCI). This is 3-(3-hydroxy-phenyl)propionate/3-hydroxycinnamic acid hydroxylase from Mycolicibacterium gilvum (strain PYR-GCK) (Mycobacterium gilvum (strain PYR-GCK)).